The following is a 2939-amino-acid chain: Serine/threonine-protein kinase tel1 (2939 aa).

3 disordered regions span residues Gly-193 to Ser-212, Pro-695 to Ser-718, and Lys-859 to Lys-886. A compositionally biased stretch (basic and acidic residues) spans Glu-697–Ala-715. In terms of domain architecture, FAT spans Ile-1869–Ala-2471. In terms of domain architecture, PI3K/PI4K catalytic spans Phe-2577–Glu-2890. Residues Ile-2583–Ala-2589 are G-loop. The segment at Gly-2755–Asn-2763 is catalytic loop. The segment at His-2775–Thr-2799 is activation loop. The segment at Asp-2869–Ala-2894 is disordered. A compositionally biased stretch (basic and acidic residues) spans Asp-2875–Ser-2884. Positions Lys-2907–Ala-2939 constitute an FATC domain.

This sequence belongs to the PI3/PI4-kinase family. ATM subfamily. As to quaternary structure, associates with DNA double-strand breaks.

Its subcellular location is the nucleus. The protein localises to the chromosome. It localises to the telomere. It carries out the reaction L-seryl-[protein] + ATP = O-phospho-L-seryl-[protein] + ADP + H(+). The catalysed reaction is L-threonyl-[protein] + ATP = O-phospho-L-threonyl-[protein] + ADP + H(+). Serine/threonine protein kinase which activates checkpoint signaling upon genotoxic stresses such as ionizing radiation (IR), ultraviolet light (UV), or DNA replication stalling, thereby acting as a DNA damage sensor. Recognizes the substrate consensus sequence [ST]-Q. Phosphorylates histone H2A to form H2AS128ph (gamma-H2A) at sites of DNA damage, involved in the regulation of DNA damage response mechanism. Required for the control of telomere length and genome stability. The chain is Serine/threonine-protein kinase tel1 (mus-21) from Neurospora crassa (strain ATCC 24698 / 74-OR23-1A / CBS 708.71 / DSM 1257 / FGSC 987).